The chain runs to 287 residues: Cis-prenyltransferase 7, chloroplastic (287 aa).

The N-terminal 34 residues, 1 to 34, are a transit peptide targeting the chloroplast; that stretch reads MLSLGFSLPPPSDNKLIITNNNQYNYRTNLANVC. Asp61 is an active-site residue.

The protein belongs to the UPP synthase family. It depends on Mg(2+) as a cofactor. Expressed in leaf trichomes and stem trichomes.

The protein localises to the plastid. It localises to the chloroplast. Its function is as follows. Uses geranylgeranyl diphosphate to catalyze the cis-prenyl chain elongation and produce polyprenyl diphosphate with a chain of 35 carbons. This Solanum lycopersicum (Tomato) protein is Cis-prenyltransferase 7, chloroplastic.